A 366-amino-acid chain; its full sequence is MLKKGPAVIGATCLTSALLLSGCGLFQSDKAAEEIDPPQDVTFVNDEAGANSNTTAAKKTESEKSDTAKADQASSTVMRELYLIDKNGYVVAQTLPLPKSESTAKQALEYLVQGGPVSEILPNGFRAVLPADTTVNVDIKKDGTAIADFSNEFKNYKKEDEQKIVQSVTWTLTQFSSIDKVKLRINGHELKEMPVGGTPISDDLSRKDGINLETAGVNDLTATHPLTVYYLAENEDSEYYVPVTKRIDNSEKDDITAAINELAKGPSKVSGLLTDFSEDVKLVSKPKIKDGRVTLDFNQSIFGSADEKTKMISSEVLNSIVLTLTEQPDVKSVSVKVNGKSELVNEKGEKLTEPVSRPSQVNTGSF.

Disordered regions lie at residues 42–72 (TFVN…KADQ) and 346–366 (EKGE…TGSF). Over residues 58–69 (KKTESEKSDTAK) the composition is skewed to basic and acidic residues. The segment covering 357–366 (RPSQVNTGSF) has biased composition (polar residues).

In terms of biological role, unknown. Affects both sporulation and germination. This Bacillus subtilis (strain 168) protein is Spore germination protein GerM (gerM).